We begin with the raw amino-acid sequence, 159 residues long: MDPALRSYHQRLRLYTPVAMGINLAASSQPLDPEGPIAVTPRPPIRPSSGKAPHPEAPRRSPNWATAGEVDVGDELIAISDERGPPRHDRPPLATSTAPSPHPRPPGYTAVVSPMALQAVDAPSLFVAWLAARWLRGASGLGAVLCGIAWYVTSIARGA.

The interval 27–107 is disordered; it reads SSQPLDPEGP…APSPHPRPPG (81 aa). The span at 80–91 shows a compositional bias: basic and acidic residues; sequence SDERGPPRHDRP.

Belongs to the HHV-1 US8.5 protein family. In terms of processing, phosphorylated.

It is found in the host nucleus. Its subcellular location is the host nucleolus. The chain is Protein US8.5 from Human herpesvirus 1 (strain 17) (HHV-1).